The primary structure comprises 161 residues: MLAEPETWVAIAFLLLMGVFAYVGVHRTVLSALDRRSARIKNELDDARRLKDEAAKLLADYKARHASAEREAQDIIASARAEAERIAAEAKAKMEDFVARRTKSAEGKIASAEAQAIADVRAAAADAAVAAASSILSNSVKGQLADELLVQGVSEVRSKLN.

The helical transmembrane segment at 5–25 (PETWVAIAFLLLMGVFAYVGV) threads the bilayer.

It belongs to the ATPase B chain family. In terms of assembly, F-type ATPases have 2 components, F(1) - the catalytic core - and F(0) - the membrane proton channel. F(1) has five subunits: alpha(3), beta(3), gamma(1), delta(1), epsilon(1). F(0) has three main subunits: a(1), b(2) and c(10-14). The alpha and beta chains form an alternating ring which encloses part of the gamma chain. F(1) is attached to F(0) by a central stalk formed by the gamma and epsilon chains, while a peripheral stalk is formed by the delta and b chains.

Its subcellular location is the cell inner membrane. In terms of biological role, f(1)F(0) ATP synthase produces ATP from ADP in the presence of a proton or sodium gradient. F-type ATPases consist of two structural domains, F(1) containing the extramembraneous catalytic core and F(0) containing the membrane proton channel, linked together by a central stalk and a peripheral stalk. During catalysis, ATP synthesis in the catalytic domain of F(1) is coupled via a rotary mechanism of the central stalk subunits to proton translocation. Component of the F(0) channel, it forms part of the peripheral stalk, linking F(1) to F(0). In Nitrobacter winogradskyi (strain ATCC 25391 / DSM 10237 / CIP 104748 / NCIMB 11846 / Nb-255), this protein is ATP synthase subunit b 1.